We begin with the raw amino-acid sequence, 189 residues long: Adenylate kinase (189 aa).

An ATP-binding site is contributed by 11–16 (GSGKGT). The tract at residues 31-60 (STGDVLRAEIKNGTELGKTAKGYIDQGQLI) is NMP. Residues Thr32, Arg37, 58–60 (QLI), 86–89 (GFPR), and Gln93 contribute to the AMP site. The segment at 127–137 (KRGKESGRADD) is LID. Residue Arg128 participates in ATP binding. Arg134 and Arg145 together coordinate AMP. Gly173 provides a ligand contact to ATP.

It belongs to the adenylate kinase family. As to quaternary structure, monomer.

The protein localises to the cytoplasm. The catalysed reaction is AMP + ATP = 2 ADP. It functions in the pathway purine metabolism; AMP biosynthesis via salvage pathway; AMP from ADP: step 1/1. Functionally, catalyzes the reversible transfer of the terminal phosphate group between ATP and AMP. Plays an important role in cellular energy homeostasis and in adenine nucleotide metabolism. The chain is Adenylate kinase from Bacteroides fragilis (strain ATCC 25285 / DSM 2151 / CCUG 4856 / JCM 11019 / LMG 10263 / NCTC 9343 / Onslow / VPI 2553 / EN-2).